Consider the following 334-residue polypeptide: Glycerol-3-phosphate dehydrogenase [NAD(P)+] (334 aa).

Residues tryptophan 13, arginine 33, and lysine 106 each contribute to the NADPH site. Sn-glycerol 3-phosphate is bound by residues lysine 106, glycine 137, and serine 139. Residue alanine 141 coordinates NADPH. Sn-glycerol 3-phosphate-binding residues include lysine 192, aspartate 245, serine 255, arginine 256, and asparagine 257. The Proton acceptor role is filled by lysine 192. Position 256 (arginine 256) interacts with NADPH. Residues valine 280 and glutamate 282 each coordinate NADPH.

Belongs to the NAD-dependent glycerol-3-phosphate dehydrogenase family.

It is found in the cytoplasm. It catalyses the reaction sn-glycerol 3-phosphate + NAD(+) = dihydroxyacetone phosphate + NADH + H(+). The enzyme catalyses sn-glycerol 3-phosphate + NADP(+) = dihydroxyacetone phosphate + NADPH + H(+). It functions in the pathway membrane lipid metabolism; glycerophospholipid metabolism. Catalyzes the reduction of the glycolytic intermediate dihydroxyacetone phosphate (DHAP) to sn-glycerol 3-phosphate (G3P), the key precursor for phospholipid synthesis. This is Glycerol-3-phosphate dehydrogenase [NAD(P)+] from Chlamydia trachomatis serovar A (strain ATCC VR-571B / DSM 19440 / HAR-13).